The following is a 471-amino-acid chain: Putative ABC transporter ATP-binding protein STK_11360 (471 aa).

2 consecutive ABC transporter domains span residues 4–241 (LEIK…LEPL) and 255–470 (VILE…VIKD). ATP is bound by residues 37–44 (GKSGSGKS) and 286–293 (GDNGSGKS).

The protein belongs to the ABC transporter superfamily.

The protein resides in the cell membrane. Functionally, probably part of an ABC transporter complex. Responsible for energy coupling to the transport system. This chain is Putative ABC transporter ATP-binding protein STK_11360, found in Sulfurisphaera tokodaii (strain DSM 16993 / JCM 10545 / NBRC 100140 / 7) (Sulfolobus tokodaii).